Consider the following 524-residue polypeptide: MATAVWAAARLLRGSAALCARPKFGSPAHRRFSSGATYPNIPLSSPLPGVPKPIFATVDGQEKFETKVTTLDNGLRVASQNKFGQFCTLGILINSGSRYEAKYLSGIAHFLEKLAFSSTARFDSKDEILLTLEKHGGICDCQTSRDTTMYAVSADSKGLDTVVGLLADVVLHPRLTDEEIEMTRMAVQFELEDLNMRPDPEPLLTEMIHEAAFRENTVGLHRFCPVENIGKIDREVLHSYLKNYYTPDRMVLAGVGVEHEHLVECARKYLLGVQPAWGAPGAVWMLTAQWHSTRGGSSRWRETCQMSALRPPRFQSSHIYGGARELLLLEEDFIPFAVLNMMMGGGGSFSAGGPGKGMFSRLYLNVLNRHHWMYNATSYHHSYEDTGLLCIHASADPRQVREMVEIITKEFILMGRTVDLVELERAKTQLMSMLMMNLESRPVIFEDVGRQVLATHSRKLPHELCTLIRNVKPEDIKRVASKMLRGKPAVAALGDLTDLPTYEHIQAALSSRDGRLPRTYRLFR.

The N-terminal 32 residues, 1 to 32, are a transit peptide targeting the mitochondrion; sequence MATAVWAAARLLRGSAALCARPKFGSPAHRRF. Residue Lys63 is modified to N6-succinyllysine.

The protein belongs to the peptidase M16 family. As to quaternary structure, heterodimer of PMPCA (alpha) and PMPCB (beta) subunits, forming the mitochondrial processing protease (MPP) in which PMPCA is involved in substrate recognition and binding and PMPCB is the catalytic subunit.

The protein localises to the mitochondrion matrix. Its subcellular location is the mitochondrion inner membrane. Its function is as follows. Substrate recognition and binding subunit of the essential mitochondrial processing protease (MPP), which cleaves the mitochondrial sequence off newly imported precursors proteins. This is Mitochondrial-processing peptidase subunit alpha (Pmpca) from Rattus norvegicus (Rat).